We begin with the raw amino-acid sequence, 303 residues long: Oxygen-dependent coproporphyrinogen-III oxidase (303 aa).

Ser-94 contributes to the substrate binding site. His-98 and His-108 together coordinate a divalent metal cation. Catalysis depends on His-108, which acts as the Proton donor. 110–112 (NVR) is a binding site for substrate. A divalent metal cation is bound by residues His-147 and His-177. The interval 242 to 277 (YVEFNLVYDRGTLFGLQTGGRTESILMSLPPLVRWE) is important for dimerization. 260–262 (GGR) is a substrate binding site.

The protein belongs to the aerobic coproporphyrinogen-III oxidase family. Homodimer. It depends on a divalent metal cation as a cofactor.

The protein localises to the cytoplasm. The catalysed reaction is coproporphyrinogen III + O2 + 2 H(+) = protoporphyrinogen IX + 2 CO2 + 2 H2O. It participates in porphyrin-containing compound metabolism; protoporphyrin-IX biosynthesis; protoporphyrinogen-IX from coproporphyrinogen-III (O2 route): step 1/1. Involved in the heme biosynthesis. Catalyzes the aerobic oxidative decarboxylation of propionate groups of rings A and B of coproporphyrinogen-III to yield the vinyl groups in protoporphyrinogen-IX. This is Oxygen-dependent coproporphyrinogen-III oxidase from Saccharophagus degradans (strain 2-40 / ATCC 43961 / DSM 17024).